Consider the following 207-residue polypeptide: Thymidylate kinase (207 aa).

G7–T14 serves as a coordination point for ATP.

This sequence belongs to the thymidylate kinase family.

The enzyme catalyses dTMP + ATP = dTDP + ADP. Its function is as follows. Phosphorylation of dTMP to form dTDP in both de novo and salvage pathways of dTTP synthesis. This is Thymidylate kinase from Aster yellows witches'-broom phytoplasma (strain AYWB).